The sequence spans 96 residues: ATP-dependent Clp protease adapter protein ClpS (96 aa).

Belongs to the ClpS family. As to quaternary structure, binds to the N-terminal domain of the chaperone ClpA.

In terms of biological role, involved in the modulation of the specificity of the ClpAP-mediated ATP-dependent protein degradation. The protein is ATP-dependent Clp protease adapter protein ClpS of Campylobacter jejuni subsp. jejuni serotype O:2 (strain ATCC 700819 / NCTC 11168).